We begin with the raw amino-acid sequence, 236 residues long: Small ribosomal subunit protein uS2c (236 aa).

This sequence belongs to the universal ribosomal protein uS2 family.

The protein resides in the plastid. It localises to the chloroplast. This chain is Small ribosomal subunit protein uS2c (rps2), found in Buxus microphylla (Littleleaf boxwood).